The following is a 252-amino-acid chain: NAC domain-containing protein 83 (252 aa).

The 147-residue stretch at 14 to 160 folds into the NAC domain; the sequence is LPPGFRFHPT…NWVLCRIFLK (147 aa). Residues 110-166 mediate DNA binding; that stretch reads VGLKKTLVFYKGKPPHGSRTDWIMHEYRLSSSPPSSMGPTQNWVLCRIFLKKRAGNK. Disordered stretches follow at residues 165-194 and 217-252; these read NKNDDDDGDSRNLRHNNNNNSSDQIEIITT and LNLLPSSPSSDHASSGVTTEIFSSSDEETSSCNSFR. 2 stretches are compositionally biased toward low complexity: residues 180–194 and 219–252; these read NNNNNSSDQIEIITT and LLPSSPSSDHASSGVTTEIFSSSDEETSSCNSFR. The tract at residues 213 to 226 is PEST-like; it reads RTTDLNLLPSSPSS.

Interacts with NAC007/VND4, NAC026/VND5 and NAC030/VND7. Interacts with the mungbean yellow mosaic virus (MYMV) AC1 replication-associated protein. In terms of tissue distribution, expressed in xylem and phloem cells in roots and inflorescence stems. Highly expressed in senescent leaves. Expressed in roots, and abscission and dehiscence tissues, such as axils of bracts and abscission zones in cauline leaves and siliques.

It is found in the nucleus. Transcriptional repressor that negatively regulates the expression of genes involved in xylem vessel formation. Represses the transcriptional activation activity of NAC030/VND7, which regulates protoxylem vessel differentiation by promoting immature xylem vessel-specific genes expression. Transcriptional activator that regulates the COLD-REGULATED (COR15A and COR15B) and RESPONSIVE TO DEHYDRATION (LTI78/RD29A and LTI65/RD29B) genes by binding directly to their promoters. Mediates signaling crosstalk between salt stress response and leaf aging process. May play a role in DNA replication of mungbean yellow mosaic virus. In Arabidopsis thaliana (Mouse-ear cress), this protein is NAC domain-containing protein 83.